The primary structure comprises 423 residues: Putative competence-damage inducible protein (423 aa).

The protein belongs to the CinA family.

In Streptococcus thermophilus (strain ATCC BAA-491 / LMD-9), this protein is Putative competence-damage inducible protein.